The chain runs to 276 residues: MAIRKLKPTSPAKRQMTVSTFEEITTNQPEKSLLEPIKNSGGRNSYGRITVRHRGGAQKRHYRIIDFKRNKDGVPAKVATIEYDPNRSANIALLHYVDGEKRYIIAPQGLKVGDMVESGPNADIKTGNALPLANIPVGTMIHNIEMKPGKGAQLVRAAGNSAQLMAKEGKHALVRLPSTEVRYLPIDCKATIGQVGNQEHENITIGKAGRKRNMGIRPTVRGSAMNPNDHPHGGGEGRTSIGRPAPVTPWGKPALGYKTRDSKKASNKMIVSRRKK.

Residues 219–276 (TVRGSAMNPNDHPHGGGEGRTSIGRPAPVTPWGKPALGYKTRDSKKASNKMIVSRRKK) are disordered.

Belongs to the universal ribosomal protein uL2 family. As to quaternary structure, part of the 50S ribosomal subunit. Forms a bridge to the 30S subunit in the 70S ribosome.

Functionally, one of the primary rRNA binding proteins. Required for association of the 30S and 50S subunits to form the 70S ribosome, for tRNA binding and peptide bond formation. It has been suggested to have peptidyltransferase activity; this is somewhat controversial. Makes several contacts with the 16S rRNA in the 70S ribosome. This Alkaliphilus oremlandii (strain OhILAs) (Clostridium oremlandii (strain OhILAs)) protein is Large ribosomal subunit protein uL2.